The sequence spans 877 residues: EF-hand domain-containing family member B (877 aa).

2 disordered regions span residues 1–47 and 268–290; these read MCSF…GRKS and AQQPEEQREAENTEPGVEPPDRI. EF-hand domains follow at residues 605-640 and 641-676; these read QNFDTLLAAFRHYDKKGDGVIDRAELQEACDQACLH and LDEKLLDQLFEYCDVDKDGLINYLEFANFLTWKDKT. Positions 618, 622, 629, 654, 656, 658, and 665 each coordinate Ca(2+).

As to quaternary structure, microtubule inner protein component of sperm flagellar doublet microtubules. Interacts with STIM1 and ORAI1; the interactions take place upon Ca(2+)-store depletion and dissociate through a Ca(2+)-dependent mechanism. Interaction with STIM1 inhibits STIM1 interaction with SARAF. In terms of tissue distribution, expressed in trachea multiciliated cells.

It is found in the cytoplasm. The protein localises to the cytoskeleton. Its subcellular location is the cilium axoneme. It localises to the flagellum axoneme. Its function is as follows. Microtubule inner protein (MIP) part of the dynein-decorated doublet microtubules (DMTs) in cilia axoneme, which is required for motile cilia beating. Cytosolic sensor for calcium, modulates the interaction of STIM1 and ORAI1 upon store depletion and the activation of store-operated Ca(2+) entry (SOCE) and NFAT translocation from cytosol to nucleus. This Bos taurus (Bovine) protein is EF-hand domain-containing family member B.